Consider the following 391-residue polypeptide: Ribosomal RNA small subunit methyltransferase H (391 aa).

A disordered region spans residues 1–23 (MDVDVQDDVQGRAGEGAEERAHD). S-adenosyl-L-methionine contacts are provided by residues 59 to 61 (GGH), Asp78, Leu112, Asp126, and Gln133. A disordered region spans residues 284–391 (SSSSAPPDLP…EPGATVERTP (108 aa)). Basic and acidic residues predominate over residues 368–380 (RTQEFETHPHLEP).

It belongs to the methyltransferase superfamily. RsmH family.

It localises to the cytoplasm. The enzyme catalyses cytidine(1402) in 16S rRNA + S-adenosyl-L-methionine = N(4)-methylcytidine(1402) in 16S rRNA + S-adenosyl-L-homocysteine + H(+). Its function is as follows. Specifically methylates the N4 position of cytidine in position 1402 (C1402) of 16S rRNA. The polypeptide is Ribosomal RNA small subunit methyltransferase H (Kineococcus radiotolerans (strain ATCC BAA-149 / DSM 14245 / SRS30216)).